Here is a 121-residue protein sequence, read N- to C-terminus: Large ribosomal subunit protein bL12 (121 aa).

This sequence belongs to the bacterial ribosomal protein bL12 family. As to quaternary structure, homodimer. Part of the ribosomal stalk of the 50S ribosomal subunit. Forms a multimeric L10(L12)X complex, where L10 forms an elongated spine to which 2 to 4 L12 dimers bind in a sequential fashion. Binds GTP-bound translation factors.

Its function is as follows. Forms part of the ribosomal stalk which helps the ribosome interact with GTP-bound translation factors. Is thus essential for accurate translation. In Halalkalibacterium halodurans (strain ATCC BAA-125 / DSM 18197 / FERM 7344 / JCM 9153 / C-125) (Bacillus halodurans), this protein is Large ribosomal subunit protein bL12.